We begin with the raw amino-acid sequence, 965 residues long: Vacuolar membrane protease (965 aa).

Residues 1–16 (MARPSLSPSNPLGFTP) lie on the Cytoplasmic side of the membrane. The helical transmembrane segment at 17 to 37 (WPVTVITAVVYLALVVPLLVV) threads the bilayer. Residues 38-387 (HHVVPSAPSS…SAFVVFELHT (350 aa)) are Vacuolar-facing. 2 N-linked (GlcNAc...) asparagine glycosylation sites follow: asparagine 53 and asparagine 119. Positions 171 and 183 each coordinate Zn(2+). Catalysis depends on glutamate 217, which acts as the Proton acceptor. Residues glutamate 218, glutamate 243, and histidine 316 each contribute to the Zn(2+) site. A helical membrane pass occupies residues 388 to 408 (LFALSVTLLVVAPLVLLVTSI). The Cytoplasmic portion of the chain corresponds to 409-441 (ALARADKMYLFRSSASPEDSDGSEVVPLHGVRG). A helical transmembrane segment spans residues 442 to 462 (FFRFPFLLVIPTAVTVGLAYL). The Vacuolar segment spans residues 463 to 472 (VTKFNPYIIH). A helical membrane pass occupies residues 473 to 493 (SSEYAVWSMMISAWVFLAWFV). Residues 494-507 (SRVADFARPSAFHR) lie on the Cytoplasmic side of the membrane. Residues 508–528 (VYTLTWLFLVEWVFLVISTVY) traverse the membrane as a helical segment. At 529–532 (ENQY) the chain is on the vacuolar side. Residues 533-553 (GLAGGYFVLFVFAGTFLATWI) traverse the membrane as a helical segment. The Cytoplasmic segment spans residues 554 to 661 (SYLELFALPR…WSIHLPKWVW (108 aa)). Positions 577 to 610 (RTSSHGSRLGTASGEDVEDGEDEDDDGTTAEATE) are disordered. A compositionally biased stretch (acidic residues) spans 591-604 (EDVEDGEDEDDDGT). The chain crosses the membrane as a helical span at residues 662-682 (VLQFLLTAPLVLIFVGPLALL). Over 683–698 (LTSALRQTGQDGSPSL) the chain is Vacuolar. A helical membrane pass occupies residues 699-719 (FIYIAVAALTTLLFIPLLPFI). Over 720 to 725 (HRYTHH) the chain is Cytoplasmic. Residues 726–746 (IPLFLLCVFAGTLIYNLVAFP) form a helical membrane-spanning segment. Topologically, residues 747 to 965 (FSPANRLKLF…LVEGSRRFEV (219 aa)) are vacuolar. 2 N-linked (GlcNAc...) asparagine glycosylation sites follow: asparagine 793 and asparagine 830.

The protein belongs to the peptidase M28 family. Requires Zn(2+) as cofactor.

The protein localises to the vacuole membrane. Functionally, may be involved in vacuolar sorting and osmoregulation. The chain is Vacuolar membrane protease from Aspergillus fumigatus (strain CBS 144.89 / FGSC A1163 / CEA10) (Neosartorya fumigata).